Consider the following 493-residue polypeptide: 3-octaprenyl-4-hydroxybenzoate carboxy-lyase (493 aa).

Asparagine 172 lines the Mn(2+) pocket. Residues isoleucine 175–arginine 177, arginine 189–leucine 191, and arginine 194–glycine 195 each bind prenylated FMN. A Mn(2+)-binding site is contributed by glutamate 238. The active-site Proton donor is the aspartate 287.

This sequence belongs to the UbiD family. In terms of assembly, homohexamer. The cofactor is prenylated FMN. Mn(2+) serves as cofactor.

The protein localises to the cell membrane. The catalysed reaction is a 4-hydroxy-3-(all-trans-polyprenyl)benzoate + H(+) = a 2-(all-trans-polyprenyl)phenol + CO2. It functions in the pathway cofactor biosynthesis; ubiquinone biosynthesis. Catalyzes the decarboxylation of 3-octaprenyl-4-hydroxy benzoate to 2-octaprenylphenol, an intermediate step in ubiquinone biosynthesis. This chain is 3-octaprenyl-4-hydroxybenzoate carboxy-lyase, found in Shewanella frigidimarina (strain NCIMB 400).